A 1389-amino-acid chain; its full sequence is DNA-directed RNA polymerase subunit beta (1389 aa).

Belongs to the RNA polymerase beta chain family. In plastids the minimal PEP RNA polymerase catalytic core is composed of four subunits: alpha, beta, beta', and beta''. When a (nuclear-encoded) sigma factor is associated with the core the holoenzyme is formed, which can initiate transcription.

It is found in the plastid. It localises to the chloroplast. The catalysed reaction is RNA(n) + a ribonucleoside 5'-triphosphate = RNA(n+1) + diphosphate. Functionally, DNA-dependent RNA polymerase catalyzes the transcription of DNA into RNA using the four ribonucleoside triphosphates as substrates. The sequence is that of DNA-directed RNA polymerase subunit beta from Phaeodactylum tricornutum (strain CCAP 1055/1).